The chain runs to 90 residues: UPF0237 protein MK1213 (90 aa).

The region spanning 5–79 (VVTVIGADRP…EELGVDVIVQ (75 aa)) is the ACT domain.

It belongs to the UPF0237 family.

The protein is UPF0237 protein MK1213 of Methanopyrus kandleri (strain AV19 / DSM 6324 / JCM 9639 / NBRC 100938).